The chain runs to 228 residues: Translin (228 aa).

Residues 86 to 90 (RFHEH) form a DNA/RNA binding region. Residues 177–198 (LDSGFRLLNLKNDSLRKRYDGL) form a leucine-zipper region. N6-acetyllysine is present on Lys187. A Phosphoserine modification is found at Ser190. Lys199 bears the N6-acetyllysine mark.

It belongs to the translin family. As to quaternary structure, ring-shaped heterooctamer of six TSN and two TSNAX subunits, DNA/RNA binding occurs inside the ring.

It localises to the cytoplasm. Its subcellular location is the nucleus. Its function is as follows. DNA-binding protein that specifically recognizes consensus sequences at the breakpoint junctions in chromosomal translocations, mostly involving immunoglobulin (Ig)/T-cell receptor gene segments. Seems to recognize single-stranded DNA ends generated by staggered breaks occurring at recombination hot spots. Functionally, exhibits both single-stranded and double-stranded endoribonuclease activity. May act as an activator of RNA-induced silencing complex (RISC) by facilitating endonucleolytic cleavage of the siRNA passenger strand. The protein is Translin of Homo sapiens (Human).